The following is a 101-amino-acid chain: MAKTSAVEKNKRRRTTVANQAAKRAGLKAIIMNQALPIEERFKASIKLASLPRDGSKTRIRNRCEVSGRPRAYYRKLRMSRIALRELGNLGKVPGIVKSSW.

This sequence belongs to the universal ribosomal protein uS14 family. In terms of assembly, part of the 30S ribosomal subunit. Contacts proteins S3 and S10.

Its function is as follows. Binds 16S rRNA, required for the assembly of 30S particles and may also be responsible for determining the conformation of the 16S rRNA at the A site. This is Small ribosomal subunit protein uS14 from Rhizobium johnstonii (strain DSM 114642 / LMG 32736 / 3841) (Rhizobium leguminosarum bv. viciae).